Consider the following 292-residue polypeptide: Porphobilinogen deaminase (292 aa).

Residue Cys-235 is modified to S-(dipyrrolylmethanemethyl)cysteine.

The protein belongs to the HMBS family. In terms of assembly, monomer. Dipyrromethane serves as cofactor.

It catalyses the reaction 4 porphobilinogen + H2O = hydroxymethylbilane + 4 NH4(+). The protein operates within porphyrin-containing compound metabolism; protoporphyrin-IX biosynthesis; coproporphyrinogen-III from 5-aminolevulinate: step 2/4. Its function is as follows. Tetrapolymerization of the monopyrrole PBG into the hydroxymethylbilane pre-uroporphyrinogen in several discrete steps. This Acetivibrio thermocellus (strain ATCC 27405 / DSM 1237 / JCM 9322 / NBRC 103400 / NCIMB 10682 / NRRL B-4536 / VPI 7372) (Clostridium thermocellum) protein is Porphobilinogen deaminase.